The primary structure comprises 115 residues: Meiotically up-regulated gene 42 protein (115 aa).

In terms of biological role, has a role in meiosis. The chain is Meiotically up-regulated gene 42 protein (mug42) from Schizosaccharomyces pombe (strain 972 / ATCC 24843) (Fission yeast).